A 459-amino-acid chain; its full sequence is Ribulose bisphosphate carboxylase large chain (459 aa).

K4 carries the N6,N6,N6-trimethyllysine modification. The substrate site is built by N113 and T163. The active-site Proton acceptor is K165. Substrate is bound at residue K167. Mg(2+) is bound by residues K191, D193, and E194. An N6-carboxylysine modification is found at K191. H284 functions as the Proton acceptor in the catalytic mechanism. Substrate is bound by residues R285, H317, and S369.

This sequence belongs to the RuBisCO large chain family. Type I subfamily. Heterohexadecamer of 8 large chains and 8 small chains; disulfide-linked. The disulfide link is formed within the large subunit homodimers. Mg(2+) is required as a cofactor. Post-translationally, the disulfide bond which can form in the large chain dimeric partners within the hexadecamer appears to be associated with oxidative stress and protein turnover.

Its subcellular location is the plastid. The protein resides in the chloroplast. It catalyses the reaction 2 (2R)-3-phosphoglycerate + 2 H(+) = D-ribulose 1,5-bisphosphate + CO2 + H2O. The enzyme catalyses D-ribulose 1,5-bisphosphate + O2 = 2-phosphoglycolate + (2R)-3-phosphoglycerate + 2 H(+). RuBisCO catalyzes two reactions: the carboxylation of D-ribulose 1,5-bisphosphate, the primary event in carbon dioxide fixation, as well as the oxidative fragmentation of the pentose substrate in the photorespiration process. Both reactions occur simultaneously and in competition at the same active site. The sequence is that of Ribulose bisphosphate carboxylase large chain from Garrya elliptica (Wavyleaf silktassel).